The chain runs to 339 residues: Heat-inducible transcription repressor HrcA (339 aa).

It belongs to the HrcA family.

In terms of biological role, negative regulator of class I heat shock genes (grpE-dnaK-dnaJ and groELS operons). Prevents heat-shock induction of these operons. This chain is Heat-inducible transcription repressor HrcA, found in Paraburkholderia phymatum (strain DSM 17167 / CIP 108236 / LMG 21445 / STM815) (Burkholderia phymatum).